Here is a 164-residue protein sequence, read N- to C-terminus: Cyclic pyranopterin monophosphate synthase (164 aa).

Substrate is bound by residues Leu77–His79 and Met115–Glu116. Asp130 is an active-site residue.

The protein belongs to the MoaC family. Homohexamer; trimer of dimers.

It catalyses the reaction (8S)-3',8-cyclo-7,8-dihydroguanosine 5'-triphosphate = cyclic pyranopterin phosphate + diphosphate. The protein operates within cofactor biosynthesis; molybdopterin biosynthesis. In terms of biological role, catalyzes the conversion of (8S)-3',8-cyclo-7,8-dihydroguanosine 5'-triphosphate to cyclic pyranopterin monophosphate (cPMP). This chain is Cyclic pyranopterin monophosphate synthase, found in Rhizobium meliloti (strain 1021) (Ensifer meliloti).